A 175-amino-acid polypeptide reads, in one-letter code: Anterior gradient protein 2 homolog (175 aa).

The N-terminal stretch at 1–20 (MEKFSVSAILLLVAISGTLA) is a signal peptide. A required to promote cell adhesion region spans residues 21 to 40 (KDTTVKSGAKKDPKDSRPKL). The segment at 24–44 (TVKSGAKKDPKDSRPKLPQTL) is disordered. A compositionally biased stretch (basic and acidic residues) spans 29 to 38 (AKKDPKDSRP). 2 consecutive short sequence motifs (homodimer stabilization; interchain) follow at residues 45 to 54 (SRGWGDQLIW) and 60 to 67 (EALYRSKT).

It belongs to the AGR family. Monomer and homodimer. Interacts with LYPD3 and DAG1 (alphaDAG1). Interacts with MUC2; disulfide-linked. Expressed in lung, skeletal muscle, testis, liver, stomach, colon, small intestine, the goblet cells of the intestine and the mucuous neck cells of the stomach.

The protein localises to the secreted. Its subcellular location is the endoplasmic reticulum. Functionally, required for MUC2 post-transcriptional synthesis and secretion. May play a role in the production of mucus by intestinal cells. Proto-oncogene that may play a role in cell migration, cell differentiation and cell growth. Promotes cell adhesion. The protein is Anterior gradient protein 2 homolog (Agr2) of Mus musculus (Mouse).